The sequence spans 339 residues: Serpentine receptor class gamma-7 (339 aa).

Transmembrane regions (helical) follow at residues 30-50 (YWIQ…IIIT), 65-85 (WILT…LFVV), 98-118 (FSTI…IYNY), 152-172 (IPLF…NTVI), 200-220 (LHLT…LLLM), 239-259 (SIFI…YAFF), and 268-288 (FLVD…PLIF). The disordered stretch occupies residues 319–339 (PFNNTMPRQESPSPNYDSILA).

The protein belongs to the nematode receptor-like protein srg family.

The protein resides in the membrane. This chain is Serpentine receptor class gamma-7 (srg-7), found in Caenorhabditis elegans.